A 304-amino-acid chain; its full sequence is Dihydroorotate dehydrogenase B (NAD(+)), catalytic subunit (304 aa).

Residues S21 and 45 to 46 (KA) contribute to the FMN site. Substrate-binding positions include K45 and 69-73 (NAIGL). N99 and N127 together coordinate FMN. N127 serves as a coordination point for substrate. The active-site Nucleophile is C130. FMN contacts are provided by K165 and I191. Residue 192–193 (NT) coordinates substrate. FMN contacts are provided by residues G217, 243-244 (GG), and 265-266 (GT).

It belongs to the dihydroorotate dehydrogenase family. Type 1 subfamily. As to quaternary structure, heterotetramer of 2 PyrK and 2 PyrD type B subunits. FMN serves as cofactor.

The protein localises to the cytoplasm. It catalyses the reaction (S)-dihydroorotate + NAD(+) = orotate + NADH + H(+). Its pathway is pyrimidine metabolism; UMP biosynthesis via de novo pathway; orotate from (S)-dihydroorotate (NAD(+) route): step 1/1. Its function is as follows. Catalyzes the conversion of dihydroorotate to orotate with NAD(+) as electron acceptor. The sequence is that of Dihydroorotate dehydrogenase B (NAD(+)), catalytic subunit (pyrD) from Listeria innocua serovar 6a (strain ATCC BAA-680 / CLIP 11262).